We begin with the raw amino-acid sequence, 485 residues long: Glutamyl-tRNA(Gln) amidotransferase subunit A (485 aa).

Catalysis depends on charge relay system residues K79 and S154. The active-site Acyl-ester intermediate is the S178.

The protein belongs to the amidase family. GatA subfamily. Heterotrimer of A, B and C subunits.

It carries out the reaction L-glutamyl-tRNA(Gln) + L-glutamine + ATP + H2O = L-glutaminyl-tRNA(Gln) + L-glutamate + ADP + phosphate + H(+). Allows the formation of correctly charged Gln-tRNA(Gln) through the transamidation of misacylated Glu-tRNA(Gln) in organisms which lack glutaminyl-tRNA synthetase. The reaction takes place in the presence of glutamine and ATP through an activated gamma-phospho-Glu-tRNA(Gln). The protein is Glutamyl-tRNA(Gln) amidotransferase subunit A of Staphylococcus epidermidis (strain ATCC 35984 / DSM 28319 / BCRC 17069 / CCUG 31568 / BM 3577 / RP62A).